The following is a 234-amino-acid chain: Nitroreductase NfnB (234 aa).

25–29 (RRAVR) is an FMN binding site. 4 residues coordinate NADP(+): serine 55, arginine 105, tyrosine 113, and isoleucine 118. FMN contacts are provided by residues tyrosine 137, 181–182 (AL), and arginine 223.

Belongs to the nitroreductase family. Homodimer. It depends on FMN as a cofactor.

Confers resistance to antitubercular drugs benzothiazinone (BTZ) and dinitrobenzamide (DNB). Inactivates BTZ and DNB by reducing an essential nitro group of these compounds to amino group or to hydroxyl amine, respectively, using NADH or NADPH as source of reducing equivalents; two electrons are transferred. Able to reduce the nitro group of bicyclic nitroimidazole PA-824, but not of quinone menadione, nitrofurazone, methyl-4-nitrobenzoate, 4-nitrobenzene methyl sulfonate or 4-nitroacetophenone. The sequence is that of Nitroreductase NfnB from Mycolicibacterium smegmatis (strain ATCC 700084 / mc(2)155) (Mycobacterium smegmatis).